The following is a 154-amino-acid chain: Large ribosomal subunit protein uL13 (154 aa).

It belongs to the universal ribosomal protein uL13 family. As to quaternary structure, part of the 50S ribosomal subunit.

Its function is as follows. This protein is one of the early assembly proteins of the 50S ribosomal subunit, although it is not seen to bind rRNA by itself. It is important during the early stages of 50S assembly. This Agrobacterium fabrum (strain C58 / ATCC 33970) (Agrobacterium tumefaciens (strain C58)) protein is Large ribosomal subunit protein uL13.